We begin with the raw amino-acid sequence, 269 residues long: DNA-binding protein RFXANK (269 aa).

A disordered region spans residues 1–36 (MEPTQVAENLVPNQQPPVPDLEDPEDTRDESPENSD). ANK repeat units lie at residues 88-127 (LDSLSIHQLAAQGELSQLKDHLRKGACPACTCLSGNNLIN), 132-161 (RGFTPLIWASAFGEIETVRFLLDWGADPHI), 165-194 (ERESALSLASMGGYTDIVRLLLDRDVDINI), 198-227 (NGGTPLLYAVRGNHVKCVEALLARGADLTT), and 231-260 (SGYTPMDLAVALGYRKVQQVMESHILRLFQ).

In terms of assembly, forms homodimers. The RFX heterotetrameric complex consists of 2 molecules of RFX5 and one each of RFXAP and RFX-B/RFXANK; with each subunit representing a separate complementation group. Interacts (via ankyrin repeats) with RFX5 (via PxLPxI/L motif); the interaction is direct. RFX forms cooperative DNA binding complexes with X2BP and CBF/NF-Y. RFX associates with CIITA to form an active transcriptional complex. Interacts with RAF1. Interacts with RFX7. Post-translationally, phosphorylated by RAF1. In terms of tissue distribution, expressed primarily in thymus, lung and testis.

Its subcellular location is the cytoplasm. It is found in the nucleus. In terms of biological role, activates transcription from class II MHC promoters. Activation requires the activity of the MHC class II transactivator/CIITA. May regulate other genes in the cell. RFX binds the X1 box of MHC-II promoters. May also potentiate the activation of RAF1. This Mus musculus (Mouse) protein is DNA-binding protein RFXANK (Rfxank).